We begin with the raw amino-acid sequence, 418 residues long: Histidine--tRNA ligase (418 aa).

Belongs to the class-II aminoacyl-tRNA synthetase family.

The protein localises to the cytoplasm. It carries out the reaction tRNA(His) + L-histidine + ATP = L-histidyl-tRNA(His) + AMP + diphosphate + H(+). The sequence is that of Histidine--tRNA ligase from Methanococcus aeolicus (strain ATCC BAA-1280 / DSM 17508 / OCM 812 / Nankai-3).